The primary structure comprises 127 residues: DNA-directed RNA polymerase subunit omega (127 aa).

The protein belongs to the RNA polymerase subunit omega family. As to quaternary structure, the RNAP catalytic core consists of 2 alpha, 1 beta, 1 beta' and 1 omega subunit. When a sigma factor is associated with the core the holoenzyme is formed, which can initiate transcription.

It catalyses the reaction RNA(n) + a ribonucleoside 5'-triphosphate = RNA(n+1) + diphosphate. Functionally, promotes RNA polymerase assembly. Latches the N- and C-terminal regions of the beta' subunit thereby facilitating its interaction with the beta and alpha subunits. The polypeptide is DNA-directed RNA polymerase subunit omega (Rickettsia typhi (strain ATCC VR-144 / Wilmington)).